Reading from the N-terminus, the 311-residue chain is Porphobilinogen deaminase (311 aa).

Cys-242 bears the S-(dipyrrolylmethanemethyl)cysteine mark.

This sequence belongs to the HMBS family. As to quaternary structure, monomer. Dipyrromethane is required as a cofactor.

The catalysed reaction is 4 porphobilinogen + H2O = hydroxymethylbilane + 4 NH4(+). Its pathway is porphyrin-containing compound metabolism; protoporphyrin-IX biosynthesis; coproporphyrinogen-III from 5-aminolevulinate: step 2/4. Its function is as follows. Tetrapolymerization of the monopyrrole PBG into the hydroxymethylbilane pre-uroporphyrinogen in several discrete steps. In Vibrio cholerae serotype O1 (strain ATCC 39315 / El Tor Inaba N16961), this protein is Porphobilinogen deaminase (hemC).